Reading from the N-terminus, the 251-residue chain is MATVTTHASASIFRPCTSKPRFLTGSSGRLNRDLSFTSIGSSAKTSSFKVEAKKGEWLPGLASPDYLTGSLAGDNGFDPLGLAEDPENLKWFVQAELVNGRWAMLGVAGMLLPEVFTKIGIINVPEWYDAGKEQYFASSSTLFVIEFILFHYVEIRRWQDIKNPGSVNQDPIFKQYSLPKGEVGYPGGIFNPLNFAPTQEAKEKELANGRLAMLAFLGFVVQHNVTGKGPFENLLQHLSDPWHNTIVQTFN.

Serine 35 carries the post-translational modification Phosphoserine. Chlorophyll b is bound at residue tryptophan 57. 2 residues coordinate chlorophyll a: phenylalanine 77 and glutamate 96. Arginine 101 is a binding site for chlorophyll b. The next 2 membrane-spanning stretches (helical) occupy residues 102–122 (WAML…IGII) and 135–155 (YFAS…YVEI). Residues serine 138, valine 144, glutamate 154, and arginine 157 each contribute to the chlorophyll b site. Lysine 204, glutamate 205, asparagine 208, arginine 210, glutamine 222, and histidine 237 together coordinate chlorophyll a.

The protein belongs to the light-harvesting chlorophyll a/b-binding (LHC) protein family. As to quaternary structure, the LHC complex consists of chlorophyll a-b binding proteins. Red-emitting heterodimer with LHCA1. The cofactor is Binds at least 14 chlorophylls (8 Chl-a and 6 Chl-b) and carotenoids such as lutein and neoxanthin.. Post-translationally, photoregulated by reversible phosphorylation of its threonine residues.

It is found in the plastid. The protein resides in the chloroplast thylakoid membrane. Its function is as follows. The light-harvesting complex (LHC) functions as a light receptor, it captures and delivers excitation energy to photosystems with which it is closely associated. The chain is Chlorophyll a-b binding protein 4, chloroplastic from Arabidopsis thaliana (Mouse-ear cress).